A 291-amino-acid chain; its full sequence is Beta-lactamase CTX-M-97 (291 aa).

Residues 1–28 form the signal peptide; the sequence is MMTQSIGRSMLTVMATLPLLFSSATLHA. The Acyl-ester intermediate role is filled by serine 73. Residue 237 to 239 participates in substrate binding; that stretch reads KTG.

This sequence belongs to the class-A beta-lactamase family.

It catalyses the reaction a beta-lactam + H2O = a substituted beta-amino acid. Is probably capable of hydrolyzing cephalosporins such as ceftriaxone and ceftazidime, thus conferring resistance to these antibiotics. The protein is Beta-lactamase CTX-M-97 (bla) of Escherichia coli.